We begin with the raw amino-acid sequence, 364 residues long: Coproporphyrin III ferrochelatase (364 aa).

Fe-coproporphyrin III is bound by residues arginine 29 and tyrosine 118. 2 residues coordinate Fe(2+): histidine 169 and glutamate 250.

It belongs to the ferrochelatase family.

It localises to the cytoplasm. It catalyses the reaction Fe-coproporphyrin III + 2 H(+) = coproporphyrin III + Fe(2+). Its pathway is porphyrin-containing compound metabolism; protoheme biosynthesis. Involved in coproporphyrin-dependent heme b biosynthesis. Catalyzes the insertion of ferrous iron into coproporphyrin III to form Fe-coproporphyrin III. The chain is Coproporphyrin III ferrochelatase from Streptococcus pneumoniae (strain ATCC 700669 / Spain 23F-1).